The sequence spans 343 residues: Dihydroorotase (343 aa).

Zn(2+) contacts are provided by H13 and H15. Substrate contacts are provided by residues 15–17 and N41; that span reads HLR. Zn(2+) contacts are provided by K99, H136, and H174. At K99 the chain carries N6-carboxylysine. H136 lines the substrate pocket. L219 is a binding site for substrate. D247 contacts Zn(2+). D247 is an active-site residue. Substrate contacts are provided by H251 and A263.

Belongs to the metallo-dependent hydrolases superfamily. DHOase family. Class II DHOase subfamily. Homodimer. Requires Zn(2+) as cofactor.

It catalyses the reaction (S)-dihydroorotate + H2O = N-carbamoyl-L-aspartate + H(+). The protein operates within pyrimidine metabolism; UMP biosynthesis via de novo pathway; (S)-dihydroorotate from bicarbonate: step 3/3. Its function is as follows. Catalyzes the reversible cyclization of carbamoyl aspartate to dihydroorotate. This is Dihydroorotase from Alkalilimnicola ehrlichii (strain ATCC BAA-1101 / DSM 17681 / MLHE-1).